We begin with the raw amino-acid sequence, 277 residues long: Putative phosphoenolpyruvate synthase regulatory protein (277 aa).

152–159 provides a ligand contact to ADP; the sequence is GVSRCGKT.

Belongs to the pyruvate, phosphate/water dikinase regulatory protein family. PSRP subfamily.

It catalyses the reaction [pyruvate, water dikinase] + ADP = [pyruvate, water dikinase]-phosphate + AMP + H(+). The catalysed reaction is [pyruvate, water dikinase]-phosphate + phosphate + H(+) = [pyruvate, water dikinase] + diphosphate. Its function is as follows. Bifunctional serine/threonine kinase and phosphorylase involved in the regulation of the phosphoenolpyruvate synthase (PEPS) by catalyzing its phosphorylation/dephosphorylation. This is Putative phosphoenolpyruvate synthase regulatory protein from Chromohalobacter salexigens (strain ATCC BAA-138 / DSM 3043 / CIP 106854 / NCIMB 13768 / 1H11).